We begin with the raw amino-acid sequence, 148 residues long: Transthyretin-like protein 2 (148 aa).

Positions 1–17 (MSKYAILGLVLVGTVAS) are cleaved as a signal peptide. A glycan (N-linked (GlcNAc...) asparagine) is linked at N77.

The protein belongs to the nematode transthyretin-like family.

The protein localises to the secreted. The protein is Transthyretin-like protein 2 (ttr-2) of Caenorhabditis elegans.